Reading from the N-terminus, the 109-residue chain is Cell division protein ZapA (109 aa).

A coiled-coil region spans residues 21 to 99; the sequence is PEQRDALNQA…IEQALLEQGR (79 aa).

This sequence belongs to the ZapA family. Type 1 subfamily. In terms of assembly, homodimer. Interacts with FtsZ.

Its subcellular location is the cytoplasm. Its function is as follows. Activator of cell division through the inhibition of FtsZ GTPase activity, therefore promoting FtsZ assembly into bundles of protofilaments necessary for the formation of the division Z ring. It is recruited early at mid-cell but it is not essential for cell division. This Klebsiella pneumoniae (strain 342) protein is Cell division protein ZapA.